The primary structure comprises 292 residues: Histamine N-methyltransferase (292 aa).

A substrate-binding site is contributed by Glu-28. S-adenosyl-L-methionine-binding residues include Gly-60, Glu-89, Gln-94, Ser-120, and Ile-142. Asn-283 contacts substrate.

This sequence belongs to the class I-like SAM-binding methyltransferase superfamily. HNMT family. In terms of assembly, monomer. As to expression, expressed in jejunum, brain &gt; lung, spleen, stomach &gt; liver, kidney.

It localises to the cytoplasm. The enzyme catalyses histamine + S-adenosyl-L-methionine = N(tau)-methylhistamine + S-adenosyl-L-homocysteine + H(+). Inactivates histamine by N-methylation. Plays an important role in degrading histamine and in regulating the airway response to histamine. The sequence is that of Histamine N-methyltransferase (HNMT) from Cavia porcellus (Guinea pig).